The chain runs to 275 residues: Large ribosomal subunit protein uL2c (275 aa).

The disordered stretch occupies residues 28-53 (TPTKSLTHANHRARGRNHSGSITTRW).

The protein belongs to the universal ribosomal protein uL2 family. In terms of assembly, part of the 50S ribosomal subunit.

The protein localises to the plastid. It is found in the chloroplast. This is Large ribosomal subunit protein uL2c (rpl2) from Nephroselmis olivacea (Green alga).